A 309-amino-acid polypeptide reads, in one-letter code: tRNA dimethylallyltransferase (309 aa).

15–22 (GPTASGKS) lines the ATP pocket. 17–22 (TASGKS) is a substrate binding site. Residues 40-43 (DSRQ) form an interaction with substrate tRNA region.

It belongs to the IPP transferase family. Monomer. The cofactor is Mg(2+).

The catalysed reaction is adenosine(37) in tRNA + dimethylallyl diphosphate = N(6)-dimethylallyladenosine(37) in tRNA + diphosphate. Catalyzes the transfer of a dimethylallyl group onto the adenine at position 37 in tRNAs that read codons beginning with uridine, leading to the formation of N6-(dimethylallyl)adenosine (i(6)A). The protein is tRNA dimethylallyltransferase of Chlorobium phaeovibrioides (strain DSM 265 / 1930) (Prosthecochloris vibrioformis (strain DSM 265)).